The chain runs to 1131 residues: Phytochrome a (1131 aa).

Positions 1–23 (MSSSRPAHSSSSSSRTRQSSQAR) are enriched in low complexity. The tract at residues 1-26 (MSSSRPAHSSSSSSRTRQSSQARILA) is disordered. One can recognise a GAF domain in the interval 219–404 (SMEALCNTVV…VFAVHVNKEF (186 aa)). Residue cysteine 324 participates in phytochromobilin binding. 2 PAS domains span residues 620–690 (VTSE…LQGK) and 750–834 (VEGD…LAGE). In terms of domain architecture, Histidine kinase spans 904–1124 (YMRHAINKPL…TFILTAELAA (221 aa)).

Belongs to the phytochrome family. As to quaternary structure, homodimer. Contains one covalently linked phytochromobilin chromophore.

In terms of biological role, regulatory photoreceptor which exists in two forms that are reversibly interconvertible by light: the Pr form that absorbs maximally in the red region of the spectrum and the Pfr form that absorbs maximally in the far-red region. Photoconversion of Pr to Pfr induces an array of morphogenic responses, whereas reconversion of Pfr to Pr cancels the induction of those responses. Pfr controls the expression of a number of nuclear genes including those encoding the small subunit of ribulose-bisphosphate carboxylase, chlorophyll A/B binding protein, protochlorophyllide reductase, rRNA, etc. It also controls the expression of its own gene(s) in a negative feedback fashion. This is Phytochrome a (PHYA) from Sorghum bicolor (Sorghum).